We begin with the raw amino-acid sequence, 260 residues long: Uroplakin-1b (260 aa).

Over 2-15 the chain is Cytoplasmic; sequence AKDDSTVRCFQGLL. Residues 16 to 36 traverse the membrane as a helical segment; it reads IFGNVIIGMCSIALMAECIFF. The Extracellular segment spans residues 37–60; the sequence is VSDQNSLYPLLEATNNDDIYAAAW. Residues 61–81 traverse the membrane as a helical segment; the sequence is IGMFVGICLFCLSVLGIVGIM. The Cytoplasmic portion of the chain corresponds to 82 to 86; it reads KSNRK. A helical membrane pass occupies residues 87–107; that stretch reads ILLVYFILMFIVYAFEVASCI. The Extracellular segment spans residues 108–229; it reads TAATQRDFFT…ELISGPMNRH (122 aa). The chain crosses the membrane as a helical span at residues 230–250; that stretch reads AWGVAWFGFAILCWTFWVLLG. Over 251–260 the chain is Cytoplasmic; that stretch reads TMFYWSRIDY.

It belongs to the tetraspanin (TM4SF) family. Heterodimer with uroplakin-3A (UPK3A) or uroplakin-3B (UPK3B). In terms of processing, N-glycosylated with high-mannose oligosaccharides. As to expression, bladder epithelium.

It localises to the membrane. In terms of biological role, component of the asymmetric unit membrane (AUM); a highly specialized biomembrane elaborated by terminally differentiated urothelial cells. May play an important role in normal bladder epithelial physiology, possibly in regulating membrane permeability of superficial umbrella cells or in stabilizing the apical membrane through AUM/cytoskeletal interactions. The sequence is that of Uroplakin-1b (UPK1B) from Bos taurus (Bovine).